The sequence spans 177 residues: NADH-quinone oxidoreductase subunit B (177 aa).

Positions 56, 57, 121, and 151 each coordinate [4Fe-4S] cluster.

It belongs to the complex I 20 kDa subunit family. In terms of assembly, NDH-1 is composed of 14 different subunits. Subunits NuoB, C, D, E, F, and G constitute the peripheral sector of the complex. The cofactor is [4Fe-4S] cluster.

It localises to the cell inner membrane. It carries out the reaction a quinone + NADH + 5 H(+)(in) = a quinol + NAD(+) + 4 H(+)(out). In terms of biological role, NDH-1 shuttles electrons from NADH, via FMN and iron-sulfur (Fe-S) centers, to quinones in the respiratory chain. The immediate electron acceptor for the enzyme in this species is believed to be ubiquinone. Couples the redox reaction to proton translocation (for every two electrons transferred, four hydrogen ions are translocated across the cytoplasmic membrane), and thus conserves the redox energy in a proton gradient. This chain is NADH-quinone oxidoreductase subunit B, found in Rhodobacter capsulatus (Rhodopseudomonas capsulata).